A 518-amino-acid polypeptide reads, in one-letter code: Maturase K (518 aa).

It belongs to the intron maturase 2 family. MatK subfamily.

It localises to the plastid. Its subcellular location is the chloroplast. Usually encoded in the trnK tRNA gene intron. Probably assists in splicing its own and other chloroplast group II introns. The chain is Maturase K from Syzygium cumini (Java plum).